The following is a 291-amino-acid chain: 4-hydroxy-tetrahydrodipicolinate synthase (291 aa).

T45 is a pyruvate binding site. Y133 serves as the catalytic Proton donor/acceptor. K161 functions as the Schiff-base intermediate with substrate in the catalytic mechanism. Pyruvate is bound at residue I203.

It belongs to the DapA family. In terms of assembly, homotetramer; dimer of dimers.

The protein localises to the cytoplasm. It carries out the reaction L-aspartate 4-semialdehyde + pyruvate = (2S,4S)-4-hydroxy-2,3,4,5-tetrahydrodipicolinate + H2O + H(+). The protein operates within amino-acid biosynthesis; L-lysine biosynthesis via DAP pathway; (S)-tetrahydrodipicolinate from L-aspartate: step 3/4. In terms of biological role, catalyzes the condensation of (S)-aspartate-beta-semialdehyde [(S)-ASA] and pyruvate to 4-hydroxy-tetrahydrodipicolinate (HTPA). In Acidithiobacillus ferrooxidans (strain ATCC 23270 / DSM 14882 / CIP 104768 / NCIMB 8455) (Ferrobacillus ferrooxidans (strain ATCC 23270)), this protein is 4-hydroxy-tetrahydrodipicolinate synthase.